Here is a 603-residue protein sequence, read N- to C-terminus: Membrane protein insertase YidC (603 aa).

A helical membrane pass occupies residues 7–27 (FFITIALSVLILAVWQYFYVL). Residues 38 to 51 (RVEQQRVEEQKKAA) are compositionally biased toward basic and acidic residues. Residues 38–76 (RVEQQRVEEQKKAAEAANPGAGTPAPAPGTIPNAPGGDT) are disordered. The segment covering 52-74 (EAANPGAGTPAPAPGTIPNAPGG) has biased composition (low complexity). Helical transmembrane passes span 352–372 (FDLL…FWLI), 378–398 (FLGN…ALFF), 452–472 (WPVA…YITI), 497–517 (LFGL…WPLI), and 540–560 (IFTW…AGLV).

It belongs to the OXA1/ALB3/YidC family. Type 1 subfamily. As to quaternary structure, interacts with the Sec translocase complex via SecD. Specifically interacts with transmembrane segments of nascent integral membrane proteins during membrane integration.

It localises to the cell inner membrane. Functionally, required for the insertion and/or proper folding and/or complex formation of integral membrane proteins into the membrane. Involved in integration of membrane proteins that insert both dependently and independently of the Sec translocase complex, as well as at least some lipoproteins. Aids folding of multispanning membrane proteins. This Mesorhizobium japonicum (strain LMG 29417 / CECT 9101 / MAFF 303099) (Mesorhizobium loti (strain MAFF 303099)) protein is Membrane protein insertase YidC.